We begin with the raw amino-acid sequence, 201 residues long: ATP-dependent Clp protease proteolytic subunit 2 (201 aa).

S98 acts as the Nucleophile in catalysis. H123 is a catalytic residue.

The protein belongs to the peptidase S14 family. As to quaternary structure, fourteen ClpP subunits assemble into 2 heptameric rings which stack back to back to give a disk-like structure with a central cavity, resembling the structure of eukaryotic proteasomes.

The protein localises to the cytoplasm. It catalyses the reaction Hydrolysis of proteins to small peptides in the presence of ATP and magnesium. alpha-casein is the usual test substrate. In the absence of ATP, only oligopeptides shorter than five residues are hydrolyzed (such as succinyl-Leu-Tyr-|-NHMec, and Leu-Tyr-Leu-|-Tyr-Trp, in which cleavage of the -Tyr-|-Leu- and -Tyr-|-Trp bonds also occurs).. Functionally, cleaves peptides in various proteins in a process that requires ATP hydrolysis. Has a chymotrypsin-like activity. Plays a major role in the degradation of misfolded proteins. The sequence is that of ATP-dependent Clp protease proteolytic subunit 2 from Pseudomonas aeruginosa (strain ATCC 15692 / DSM 22644 / CIP 104116 / JCM 14847 / LMG 12228 / 1C / PRS 101 / PAO1).